Consider the following 440-residue polypeptide: Xylose isomerase (440 aa).

Catalysis depends on residues H101 and D104. Mg(2+)-binding residues include E232, E268, H271, D296, D307, D309, and D339.

This sequence belongs to the xylose isomerase family. In terms of assembly, homotetramer. The cofactor is Mg(2+).

The protein resides in the cytoplasm. The enzyme catalyses alpha-D-xylose = alpha-D-xylulofuranose. This is Xylose isomerase from Salmonella agona (strain SL483).